Consider the following 546-residue polypeptide: Cyclic GMP-AMP synthase-like receptor (546 aa).

Residues 1-10 (MPVGSRQNRV) show a composition bias toward polar residues. Disordered stretches follow at residues 1 to 116 (MPVG…CASR) and 134 to 186 (AKQE…RLTN). Over residues 35–45 (YTERKERKDVQ) the composition is skewed to basic and acidic residues. Residues 69–80 (TSRTLRQTSQSR) show a composition bias toward low complexity. Basic and acidic residues-rich tracts occupy residues 82-95 (EVLE…DCKK) and 145-174 (KEGY…DKAT). Positions 175-186 (SHSTKGSFRLTN) are enriched in polar residues. Residues S243 and 255–257 (EFD) contribute to the ATP site. Mg(2+) is bound by residues E255, D257, and D374. Residues D374 and 428-435 (RTSFSLAE) contribute to the GTP site. Residues 432–435 (SLAE), K455, and 470–474 (SYHLK) each bind ATP.

Belongs to the mab-21 family. Requires Mg(2+) as cofactor. Mn(2+) is required as a cofactor.

It catalyses the reaction GTP + ATP = 2',3'-cGAMP + 2 diphosphate. The catalysed reaction is GTP + ATP = pppGp(2'-5')A + diphosphate. It carries out the reaction pppGp(2'-5')A = 2',3'-cGAMP + diphosphate. In terms of biological role, nucleotidyltransferase that catalyzes the formation of cyclic GMP-AMP (2',3'-cGAMP) from ATP and GTP and plays a key role in innate immunity. Directly binds some unknown ligand, activating the nucleotidyltransferase activity, leading to synthesis of 2',3'-cGAMP, a second messenger that binds to and activates Sting, thereby triggering the immune response via activation of the NF-kappa-B transcription factor. This Exaiptasia diaphana (Tropical sea anemone) protein is Cyclic GMP-AMP synthase-like receptor.